The sequence spans 487 residues: L-tartrate/succinate antiporter (487 aa).

A run of 14 helical transmembrane segments spans residues 10-30 (YLAP…AGLE), 33-53 (TWLY…EPVP), 54-74 (GAVV…WLLF), 93-113 (WAVS…FMFG), 137-157 (TLFL…VTPS), 189-209 (IGSY…AIFL), 236-256 (FLGM…LAYV), 292-312 (LMVG…AAMV), 313-333 (GYSV…DIVS), 340-360 (VFFW…TGFI), 370-390 (SLSG…FYLL), 393-413 (FFAS…AAAL), 418-438 (IPLP…SILT), and 465-485 (IFGL…MPVV).

This sequence belongs to the SLC13A/DASS transporter (TC 2.A.47) family. DIT1 subfamily.

The protein localises to the cell inner membrane. It catalyses the reaction (2R,3R)-tartrate(out) + succinate(in) = (2R,3R)-tartrate(in) + succinate(out). In terms of biological role, catalyzes the uptake of tartrate in exchange for intracellular succinate. Essential for anaerobic L-tartrate fermentation. The chain is L-tartrate/succinate antiporter (ttdT) from Escherichia coli O6:K15:H31 (strain 536 / UPEC).